Consider the following 332-residue polypeptide: Phospho-N-acetylmuramoyl-pentapeptide-transferase (332 aa).

8 helical membrane-spanning segments follow: residues 9–29, 55–75, 79–99, 115–135, 155–175, 196–216, 253–273, and 312–332; these read IYTI…IIPF, TIGG…AGLI, LWVA…DDFI, MSLQ…ISVM, IPQY…VVVA, IVAA…LAIF, AVAI…IYFA, and VVIV…LGLN.

It belongs to the glycosyltransferase 4 family. MraY subfamily. The cofactor is Mg(2+).

The protein localises to the cell membrane. The catalysed reaction is UDP-N-acetyl-alpha-D-muramoyl-L-alanyl-gamma-D-glutamyl-meso-2,6-diaminopimeloyl-D-alanyl-D-alanine + di-trans,octa-cis-undecaprenyl phosphate = di-trans,octa-cis-undecaprenyl diphospho-N-acetyl-alpha-D-muramoyl-L-alanyl-D-glutamyl-meso-2,6-diaminopimeloyl-D-alanyl-D-alanine + UMP. It functions in the pathway cell wall biogenesis; peptidoglycan biosynthesis. Catalyzes the initial step of the lipid cycle reactions in the biosynthesis of the cell wall peptidoglycan: transfers peptidoglycan precursor phospho-MurNAc-pentapeptide from UDP-MurNAc-pentapeptide onto the lipid carrier undecaprenyl phosphate, yielding undecaprenyl-pyrophosphoryl-MurNAc-pentapeptide, known as lipid I. The protein is Phospho-N-acetylmuramoyl-pentapeptide-transferase of Alkaliphilus oremlandii (strain OhILAs) (Clostridium oremlandii (strain OhILAs)).